The sequence spans 778 residues: Endonuclease MutS2 (778 aa).

328–335 is a binding site for ATP; the sequence is GPNTGGKT. A Smr domain is found at 703-778; that stretch reads LDLRGKRYEE…GSGCTIANLG (76 aa).

Belongs to the DNA mismatch repair MutS family. MutS2 subfamily. As to quaternary structure, homodimer. Binds to stalled ribosomes, contacting rRNA.

Functionally, endonuclease that is involved in the suppression of homologous recombination and thus may have a key role in the control of bacterial genetic diversity. Acts as a ribosome collision sensor, splitting the ribosome into its 2 subunits. Detects stalled/collided 70S ribosomes which it binds and splits by an ATP-hydrolysis driven conformational change. Acts upstream of the ribosome quality control system (RQC), a ribosome-associated complex that mediates the extraction of incompletely synthesized nascent chains from stalled ribosomes and their subsequent degradation. Probably generates substrates for RQC. In Streptococcus equi subsp. equi (strain 4047), this protein is Endonuclease MutS2.